A 255-amino-acid chain; its full sequence is tRNA pseudouridine synthase B (255 aa).

Asp-52 functions as the Nucleophile in the catalytic mechanism. Tyr-80, Tyr-183, and Leu-204 together coordinate substrate.

This sequence belongs to the pseudouridine synthase TruB family. Type 1 subfamily.

It carries out the reaction uridine(55) in tRNA = pseudouridine(55) in tRNA. In terms of biological role, responsible for synthesis of pseudouridine from uracil-55 in the psi GC loop of transfer RNAs. The polypeptide is tRNA pseudouridine synthase B (Blochmanniella floridana).